The sequence spans 115 residues: Large ribosomal subunit protein bL20c (115 aa).

This sequence belongs to the bacterial ribosomal protein bL20 family.

The protein resides in the plastid. It is found in the chloroplast. Functionally, binds directly to 23S ribosomal RNA and is necessary for the in vitro assembly process of the 50S ribosomal subunit. It is not involved in the protein synthesizing functions of that subunit. The sequence is that of Large ribosomal subunit protein bL20c from Physcomitrium patens (Spreading-leaved earth moss).